Here is a 1079-residue protein sequence, read N- to C-terminus: DNA-directed RNA polymerase subunit beta (1079 aa).

The interval 963–982 (RSTGPYSRVTQQPVKGRARR) is disordered. Polar residues predominate over residues 966–975 (GPYSRVTQQP).

Belongs to the RNA polymerase beta chain family. In plastids the minimal PEP RNA polymerase catalytic core is composed of four subunits: alpha, beta, beta', and beta''. When a (nuclear-encoded) sigma factor is associated with the core the holoenzyme is formed, which can initiate transcription.

The protein localises to the plastid. The protein resides in the chloroplast. It catalyses the reaction RNA(n) + a ribonucleoside 5'-triphosphate = RNA(n+1) + diphosphate. DNA-dependent RNA polymerase catalyzes the transcription of DNA into RNA using the four ribonucleoside triphosphates as substrates. In Pelargonium hortorum (Common geranium), this protein is DNA-directed RNA polymerase subunit beta.